We begin with the raw amino-acid sequence, 178 residues long: Ribosome maturation factor RimP (178 aa).

This sequence belongs to the RimP family.

Its subcellular location is the cytoplasm. Required for maturation of 30S ribosomal subunits. This chain is Ribosome maturation factor RimP, found in Streptococcus pyogenes serotype M3 (strain ATCC BAA-595 / MGAS315).